The chain runs to 323 residues: Leukocyte surface antigen CD47 (323 aa).

The signal sequence occupies residues 1–18 (MWPLVAALLLGSACCGSA). A Pyrrolidone carboxylic acid modification is found at Gln-19. Positions 19–127 (QLLFNKTKSV…ELTREGETII (109 aa)) constitute an Ig-like V-type domain. At 19–141 (QLLFNKTKSV…RVVSWFSPNE (123 aa)) the chain is on the extracellular side. Residues Asn-23, Asn-34, Asn-50, and Asn-73 are each glycosylated (N-linked (GlcNAc...) asparagine). 2 cysteine pairs are disulfide-bonded: Cys-33–Cys-263 and Cys-41–Cys-114. Ser-89 carries the post-translational modification Phosphoserine. An N-linked (GlcNAc...) asparagine glycan is attached at Asn-111. Residues 142 to 162 (NILIVIFPIFAILLFWGQFGI) form a helical membrane-spanning segment. Topologically, residues 163–176 (KTLKYRSGGMDEKT) are cytoplasmic. A helical membrane pass occupies residues 177–197 (IALLVAGLVITVIVIVGAILF). Residues 198–207 (VPGEYSLKNA) lie on the Extracellular side of the membrane. N-linked (GlcNAc...) asparagine glycosylation is present at Asn-206. Residues 208–228 (TGLGLIVTSTGILILLHYYVF) traverse the membrane as a helical segment. The Cytoplasmic segment spans residues 229-235 (STAIGLT). The chain crosses the membrane as a helical span at residues 236–256 (SFVIAILVIQVIAYILAVVGL). The Extracellular segment spans residues 257–268 (SLCIAACIPMHG). The chain crosses the membrane as a helical span at residues 269–289 (PLLISGLSILALAQLLGLVYM). At 290–323 (KFVASNQKTIQPPRKAVEEPLNAFKESKGMMNDE) the chain is on the cytoplasmic side.

Monomer. Interacts with THBS1 (via the C-terminal domain). Interacts with SIRPA. Interacts with FAS/CD95; interaction may be enhanced by functional activation. Interacts with SIRPG, UBQLN1 and UBQLN2. May interact with fibrinogen. Interacts with Aedes aegypti neutrophil-stimulating factor 1; the interaction results in inhibition of phagocytosis activity of macrophages. Very broadly distributed on normal adult tissues, as well as ovarian tumors, being especially abundant in some epithelia and the brain. Macrophages.

The protein localises to the cell membrane. In terms of biological role, adhesive protein that mediates cell-to-cell interactions. Acts as a receptor for thrombospondin THBS1 and as modulator of integrin signaling through the activation of heterotrimeric G proteins. Involved in signal transduction, cardiovascular homeostasis, inflammation, apoptosis, angiogenesis, cellular self-renewal, and immunoregulation. Plays a role in modulating pulmonary endothelin EDN1 signaling. Modulates nitrous oxide (NO) signaling, in response to THBS1, hence playing a role as a pressor agent, supporting blood pressure. Plays an important role in memory formation and synaptic plasticity in the hippocampus. Receptor for SIRPA, binding to which prevents maturation of immature dendritic cells and inhibits cytokine production by mature dendritic cells. Interaction with SIRPG mediates cell-cell adhesion, enhances superantigen-dependent T-cell-mediated proliferation and costimulates T-cell activation. Positively modulates FAS-dependent apoptosis in T-cells, perhaps by enhancing FAS clustering. Plays a role in suppressing angiogenesis and may be involved in metabolic dysregulation during normal aging. In response to THBS1, negatively modulates wound healing. Inhibits stem cell self-renewal, in response to THBS1, probably by regulation of the stem cell transcription factors POU5F1/OCT4, SOX2, MYC/c-Myc and KLF4. May play a role in membrane transport and/or integrin dependent signal transduction. May prevent premature elimination of red blood cells. The polypeptide is Leukocyte surface antigen CD47 (CD47) (Homo sapiens (Human)).